The primary structure comprises 209 residues: UPF0174 protein HP_1587 (209 aa).

Belongs to the UPF0174 family.

In Helicobacter pylori (strain ATCC 700392 / 26695) (Campylobacter pylori), this protein is UPF0174 protein HP_1587.